The sequence spans 151 residues: Large ribosomal subunit protein eL19 (151 aa).

The interval 62–93 (RLKERRKKRSLKSEGKKSGSRKGKKGARANSK) is disordered. Positions 79 to 88 (SGSRKGKKGA) are enriched in basic residues.

The protein belongs to the eukaryotic ribosomal protein eL19 family. Part of the 50S ribosomal subunit.

Functionally, binds to the 23S rRNA. This Saccharolobus solfataricus (strain ATCC 35092 / DSM 1617 / JCM 11322 / P2) (Sulfolobus solfataricus) protein is Large ribosomal subunit protein eL19.